The sequence spans 109 residues: Thiosulfate sulfurtransferase GlpE (109 aa).

In terms of domain architecture, Rhodanese spans 16–104 (REQGAVVVDI…WRTTYPAEIS (89 aa)). Residue Cys-64 is the Cysteine persulfide intermediate of the active site.

It belongs to the GlpE family.

It is found in the cytoplasm. The enzyme catalyses thiosulfate + hydrogen cyanide = thiocyanate + sulfite + 2 H(+). It catalyses the reaction thiosulfate + [thioredoxin]-dithiol = [thioredoxin]-disulfide + hydrogen sulfide + sulfite + 2 H(+). Transferase that catalyzes the transfer of sulfur from thiosulfate to thiophilic acceptors such as cyanide or dithiols. May function in a CysM-independent thiosulfate assimilation pathway by catalyzing the conversion of thiosulfate to sulfite, which can then be used for L-cysteine biosynthesis. The polypeptide is Thiosulfate sulfurtransferase GlpE (Pseudomonas fluorescens (strain SBW25)).